Reading from the N-terminus, the 122-residue chain is Large ribosomal subunit protein uL14 (122 aa).

It belongs to the universal ribosomal protein uL14 family. As to quaternary structure, part of the 50S ribosomal subunit. Forms a cluster with proteins L3 and L19. In the 70S ribosome, L14 and L19 interact and together make contacts with the 16S rRNA in bridges B5 and B8. Can interact with ribosomal silencing factor RsfS, which may inhibit ribosomal subunit association.

In terms of biological role, binds to 23S rRNA. Forms part of two intersubunit bridges in the 70S ribosome. This chain is Large ribosomal subunit protein uL14, found in Synechocystis sp. (strain ATCC 27184 / PCC 6803 / Kazusa).